The following is a 310-amino-acid chain: Homoserine kinase (310 aa).

ATP is bound at residue 91–101; sequence PIGSGLGSSAC.

The protein belongs to the GHMP kinase family. Homoserine kinase subfamily.

It is found in the cytoplasm. It carries out the reaction L-homoserine + ATP = O-phospho-L-homoserine + ADP + H(+). It participates in amino-acid biosynthesis; L-threonine biosynthesis; L-threonine from L-aspartate: step 4/5. Its function is as follows. Catalyzes the ATP-dependent phosphorylation of L-homoserine to L-homoserine phosphate. In Escherichia coli (strain SE11), this protein is Homoserine kinase.